We begin with the raw amino-acid sequence, 162 residues long: Probable chemoreceptor glutamine deamidase CheD (162 aa).

This sequence belongs to the CheD family.

It catalyses the reaction L-glutaminyl-[protein] + H2O = L-glutamyl-[protein] + NH4(+). In terms of biological role, probably deamidates glutamine residues to glutamate on methyl-accepting chemotaxis receptors (MCPs), playing an important role in chemotaxis. This Clostridium kluyveri (strain ATCC 8527 / DSM 555 / NBRC 12016 / NCIMB 10680 / K1) protein is Probable chemoreceptor glutamine deamidase CheD.